Reading from the N-terminus, the 498-residue chain is Bifunctional protein GlmU (498 aa).

The interval 1–238 is pyrophosphorylase; the sequence is MSDAAVVILA…PALVAGVNDR (238 aa). Residues 9-12, Lys-23, Gln-80, and 85-86 each bind UDP-N-acetyl-alpha-D-glucosamine; these read LAAG and GT. Position 111 (Asp-111) interacts with Mg(2+). UDP-N-acetyl-alpha-D-glucosamine is bound by residues Gly-148, Glu-163, Asn-178, and Asn-236. Mg(2+) is bound at residue Asn-236. The segment at 239 to 259 is linker; that stretch reads VQLADLGAELNRRVVAAHQRA. Positions 260–498 are N-acetyltransferase; that stretch reads GVTIVDPATT…TAKPAPATGE (239 aa). UDP-N-acetyl-alpha-D-glucosamine-binding residues include Arg-341 and Lys-359. His-371 serves as the catalytic Proton acceptor. Residues Tyr-374 and Asn-385 each contribute to the UDP-N-acetyl-alpha-D-glucosamine site. Residues Ala-388, 394 to 395, Ser-413, and Ala-431 each bind acetyl-CoA; that span reads NY. The interval 470 to 498 is disordered; the sequence is AAEAAAADGDTAAADRAAATAKPAPATGE.

This sequence in the N-terminal section; belongs to the N-acetylglucosamine-1-phosphate uridyltransferase family. It in the C-terminal section; belongs to the transferase hexapeptide repeat family. Homotrimer. Mg(2+) is required as a cofactor.

The protein resides in the cytoplasm. The enzyme catalyses alpha-D-glucosamine 1-phosphate + acetyl-CoA = N-acetyl-alpha-D-glucosamine 1-phosphate + CoA + H(+). It carries out the reaction N-acetyl-alpha-D-glucosamine 1-phosphate + UTP + H(+) = UDP-N-acetyl-alpha-D-glucosamine + diphosphate. It functions in the pathway nucleotide-sugar biosynthesis; UDP-N-acetyl-alpha-D-glucosamine biosynthesis; N-acetyl-alpha-D-glucosamine 1-phosphate from alpha-D-glucosamine 6-phosphate (route II): step 2/2. The protein operates within nucleotide-sugar biosynthesis; UDP-N-acetyl-alpha-D-glucosamine biosynthesis; UDP-N-acetyl-alpha-D-glucosamine from N-acetyl-alpha-D-glucosamine 1-phosphate: step 1/1. Its pathway is bacterial outer membrane biogenesis; LPS lipid A biosynthesis. Its function is as follows. Catalyzes the last two sequential reactions in the de novo biosynthetic pathway for UDP-N-acetylglucosamine (UDP-GlcNAc). The C-terminal domain catalyzes the transfer of acetyl group from acetyl coenzyme A to glucosamine-1-phosphate (GlcN-1-P) to produce N-acetylglucosamine-1-phosphate (GlcNAc-1-P), which is converted into UDP-GlcNAc by the transfer of uridine 5-monophosphate (from uridine 5-triphosphate), a reaction catalyzed by the N-terminal domain. This is Bifunctional protein GlmU from Mycolicibacterium gilvum (strain PYR-GCK) (Mycobacterium gilvum (strain PYR-GCK)).